An 830-amino-acid chain; its full sequence is MDATNKQYALRDRAELSAFVNQPFRNNSRIKFTCFDCSPKYFVFGANSGSLYLYDRITTSFLAIFPSQLGTIGKVSISHNEKQIAIGNQTGSIGILSTELAPSTDGEGQPIDLGGPAFVTSFCWTEDDRELYCGDSRGIVSLIQFSLFMGRNILNISLHPVLLLENRIVQIDRYKDLLLVSTLSKCVLCNTAREEFKQIGNRPRDGHATTTTTTPSPPLMIVDEEDVRIFCSRPGSRLWEADLEGNVIRTHQFKQAAAAAAAQQQLQCLQESELATAPTEAPDGTLMVVPFQVLYSIRRQLLLVHDRCQLLIIDPLHSKIVLRTDEFTDITHVAVVDEWIYLLTGENRVFQVRVEIQGDEDPFPTPGMVDEPCLESRKQKQGVYILDSMLNNNNNNNGKQMNGKESPLLLSTEATIKEALVSVVRGKYGRNIKQMFMGYEQQQQQRTPSGAPERPKTLNLTKIYEPSRSNAFANGNGHALLAEFGIEAEVEDLECDDMMEELVQTRTGQALLGTAMPNGAGTGKQQPGKKKFSTSLLDGYETSEDDATVRNLYLIFRSSIISNLNFADRYAKIFDEYDTETIVRLLRKLETLMEENEEPNARLKCMRIYFHYLKPELLWEIDADSRQFIKDGFIVCNTTDGADRARLERLAHCAACGYYLEATASCHYREIGTSLLQYYWSRKEYDECFAMVKRVPYLWRTITRYYIQDRREDKVVQCVWNLADSELLERAAGELPFELDHWRQLFELAIAYHQRHEMICLSCDKPTGGRLEDNQPESQFRQWNYLLGVALAHIRSPTELLCLVRRYADNIPRGAIAPSFYIRCLLLEAK.

WD repeat units lie at residues 25–64 (RNNS…FLAI), 67–106 (SQLG…STDG), and 114–153 (GGPA…GRNI). Residues 578–604 (DTETIVRLLRKLETLMEENEEPNARLK) adopt a coiled-coil conformation.

The protein belongs to the HPS5 family.

In terms of biological role, has a role in the biogenesis of eye pigment granules. Eye pigment granules are specialized forms of late endosomes or lysosomes. Biogenesis of pigment granules in the eye requires molecular components required for protein delivery to lysosomes. The chain is BLOC-2 complex member HPS5 homolog from Anopheles gambiae (African malaria mosquito).